The primary structure comprises 222 residues: Iodotyrosine deiodinase (222 aa).

FMN contacts are provided by residues 34-38 (RRTVR) and 61-62 (PS). 3-iodo-L-tyrosine contacts are provided by Glu-91, Tyr-95, and Lys-116. Residues 171-173 (THT) and Arg-212 contribute to the FMN site.

The protein belongs to the nitroreductase family. In terms of assembly, homodimer. FMN is required as a cofactor.

It carries out the reaction 2 iodide + L-tyrosine + 2 NADP(+) = 3,5-diiodo-L-tyrosine + 2 NADPH + H(+). The catalysed reaction is iodide + L-tyrosine + NADP(+) = 3-iodo-L-tyrosine + NADPH. It catalyses the reaction 3-iodo-L-tyrosine + iodide + NADP(+) = 3,5-diiodo-L-tyrosine + NADPH + H(+). The enzyme catalyses L-tyrosine + chloride + NADP(+) = 3-chloro-L-tyrosine + NADPH. It carries out the reaction bromide + L-tyrosine + NADP(+) = 3-bromo-L-tyrosine + NADPH. In terms of biological role, catalyzes the dehalogenation of halotyrosines such as 3-iodo-L-tyrosine and 3,5-diiodo-L-tyrosine. Likely to also catalyze the dehalogenation of other halotyrosines such as 3-bromo-L-tyrosine, 3-chloro-L-tyrosine and 3-iodo-L-tyrosine. Activity towards 3-iodo-L-tyrosine is much stronger than activity towards 3,5-diiodo-L-tyrosine and 2-iodophenol. The polypeptide is Iodotyrosine deiodinase (Haliscomenobacter hydrossis (strain ATCC 27775 / DSM 1100 / LMG 10767 / O)).